A 427-amino-acid polypeptide reads, in one-letter code: Serine--tRNA ligase (427 aa).

Position 232–234 (232–234 (TAE)) interacts with L-serine. Residue 263–265 (RSE) coordinates ATP. L-serine is bound at residue Glu286. 350–353 (EISS) contributes to the ATP binding site. Ser385 serves as a coordination point for L-serine.

It belongs to the class-II aminoacyl-tRNA synthetase family. Type-1 seryl-tRNA synthetase subfamily. Homodimer. The tRNA molecule binds across the dimer.

It is found in the cytoplasm. The enzyme catalyses tRNA(Ser) + L-serine + ATP = L-seryl-tRNA(Ser) + AMP + diphosphate + H(+). The catalysed reaction is tRNA(Sec) + L-serine + ATP = L-seryl-tRNA(Sec) + AMP + diphosphate + H(+). It functions in the pathway aminoacyl-tRNA biosynthesis; selenocysteinyl-tRNA(Sec) biosynthesis; L-seryl-tRNA(Sec) from L-serine and tRNA(Sec): step 1/1. Functionally, catalyzes the attachment of serine to tRNA(Ser). Is also able to aminoacylate tRNA(Sec) with serine, to form the misacylated tRNA L-seryl-tRNA(Sec), which will be further converted into selenocysteinyl-tRNA(Sec). The protein is Serine--tRNA ligase of Aromatoleum aromaticum (strain DSM 19018 / LMG 30748 / EbN1) (Azoarcus sp. (strain EbN1)).